The primary structure comprises 952 residues: Pentatricopeptide repeat-containing protein At5g04810, chloroplastic (952 aa).

The transit peptide at 1–60 directs the protein to the chloroplast; the sequence is MDNGGSVLSLSAPHFPYSATILRRHSPVASISFSLKQPPPQPPEPPESPPDLRRPEKSIG. Disordered regions lie at residues 30-95 and 115-163; these read SISF…VSPL and LRLS…EFRQ. Over residues 37–49 the composition is skewed to pro residues; it reads QPPPQPPEPPESP. The span at 58-68 shows a compositional bias: low complexity; the sequence is SIGSSSSSSSP. The span at 122–133 shows a compositional bias: pro residues; it reads SPPPPPPPPPPV. The span at 137 to 163 shows a compositional bias: basic and acidic residues; the sequence is TQFRDEFRSDTKPPEEETRNPQQEFRQ. Positions 167–238 constitute an RRM domain; that stretch reads IFVGNLPTWI…VEFHGRILTV (72 aa). Basic and acidic residues predominate over residues 259–280; sequence EGEEDTKMSNKSSWHQEREGSR. The tract at residues 259–281 is disordered; sequence EGEEDTKMSNKSSWHQEREGSRK. 15 PPR repeats span residues 308-342, 343-377, 378-412, 413-447, 448-482, 483-517, 518-552, 553-587, 588-622, 623-657, 658-692, 693-727, 728-762, 763-797, and 798-832; these read SRTE…GITP, TSRI…GIEM, SLVT…HKTL, NASI…GIDA, PIAI…GFTP, TVVT…GVKH, NLKT…GMKP, DVIL…RHRP, TTRT…GCVP, TVHT…GVSA, NEHT…GLDV, DIFT…NIPR, NSFV…GVKP, DIHT…GVKP, and NIKT…GIKP. The segment at 918 to 952 is disordered; that stretch reads DQVSDVDSDEDDVDGEDGEDDEDVNSVSDLLSPYK. Residues 921 to 941 are compositionally biased toward acidic residues; that stretch reads SDVDSDEDDVDGEDGEDDEDV.

The protein belongs to the PPR family. P subfamily.

It is found in the plastid. It localises to the chloroplast. In terms of biological role, may play a role in the plastid ribosome biogenesis. The chain is Pentatricopeptide repeat-containing protein At5g04810, chloroplastic (PPR4) from Arabidopsis thaliana (Mouse-ear cress).